We begin with the raw amino-acid sequence, 287 residues long: Nematocyst expressed protein 6 (287 aa).

The signal sequence occupies residues 1-20 (MKGFIFAGVLVSALICLAEG). In terms of domain architecture, Peptidase M12A spans 53–249 (RAALRDRYLW…RQTNLMYKCN (197 aa)). Intrachain disulfides connect Cys-95–Cys-248 and Cys-116–Cys-139. His-146 contacts Zn(2+). Glu-147 is an active-site residue. Zn(2+) contacts are provided by His-150 and His-156. Positions 249–287 (NAQGDSELQPVNDEDEDKDGGDSKKKPDPKGPKPGEIEE) are disordered. The span at 268-287 (GGDSKKKPDPKGPKPGEIEE) shows a compositional bias: basic and acidic residues.

It depends on Zn(2+) as a cofactor. Nematocyte and pharyngeal gland.

Its subcellular location is the secreted. The protein localises to the nematocyst. Metalloprotease. This chain is Nematocyst expressed protein 6, found in Nematostella vectensis (Starlet sea anemone).